The following is a 423-amino-acid chain: SH2 domain-containing adapter protein F (423 aa).

Disordered stretches follow at residues Met-1–Arg-87, Asp-110–Lys-208, and Asp-225–Thr-312. Acidic residues predominate over residues Glu-192–Gln-203. Tyr-201 is modified (phosphotyrosine). One can recognise an SH2 domain in the interval Trp-323 to Val-418.

In terms of assembly, interacts with phosphorylated 'Tyr-720' of PDGFRA via its SH2 domain. In terms of processing, may become phosphorylated upon binding to PDGFRA. In terms of tissue distribution, expressed in skeletal muscle, brain, liver, prostate, testis, ovary, small intestine and colon.

Its function is as follows. Adapter protein which may play a role in the regulation of apoptosis in response to PDGF. This Homo sapiens (Human) protein is SH2 domain-containing adapter protein F.